The sequence spans 776 residues: LPS-assembly protein LptD (776 aa).

The signal sequence occupies residues 1–24 (MQHFSRTFLAASIATALFAPYAQA).

Belongs to the LptD family. As to quaternary structure, component of the lipopolysaccharide transport and assembly complex. Interacts with LptE and LptA.

It localises to the cell outer membrane. Functionally, together with LptE, is involved in the assembly of lipopolysaccharide (LPS) at the surface of the outer membrane. The polypeptide is LPS-assembly protein LptD (Vibrio vulnificus (strain YJ016)).